Here is a 105-residue protein sequence, read N- to C-terminus: uncharacterized protein (105 aa).

Disordered stretches follow at residues 29 to 55 (HTRVGVTDPDPRVPPLLPGPAGVTDES) and 72 to 105 (EQRGDRRAVRCEPAGEPPLDDVRTPAAPAVRSGR). The span at 72-81 (EQRGDRRAVR) shows a compositional bias: basic and acidic residues.

This is an uncharacterized protein from Streptomyces coelicolor (strain ATCC BAA-471 / A3(2) / M145).